Here is a 154-residue protein sequence, read N- to C-terminus: Hydroperoxy fatty acid reductase Gpx2 (154 aa).

The active site involves Cys34.

This sequence belongs to the glutathione peroxidase family. Monomer.

It carries out the reaction a hydroperoxy polyunsaturated fatty acid + NADPH + H(+) = a hydroxy polyunsaturated fatty acid + NADP(+) + H2O. Its activity is regulated as follows. Mercaptosuccinate, pCMB, and nethylmaleimide act as inhibitors of the catalytic activity. In terms of biological role, hydroperoxy fatty acid reductase essential for the removal of lipid hydroperoxides under normal and stress conditions, leading to the protection of membrane integrity. This is Hydroperoxy fatty acid reductase Gpx2 (gpx2) from Synechocystis sp. (strain ATCC 27184 / PCC 6803 / Kazusa).